The primary structure comprises 319 residues: Ankyrin repeat domain-containing protein 1 (319 aa).

Positions 63–89 form a coiled coil; sequence EKQLEAELKKKKLEQRSKLENLEDLEI. ANK repeat units lie at residues 152 to 181, 185 to 214, 218 to 247, 251 to 280, and 284 to 315; these read YKRT…QIEF, LEST…KISA, LLST…DLNA, EGDT…DLTI, and AGKT…KTSR.

Interacts with TTN/titin and YBX1.

The protein resides in the nucleus. May play an important role in endothelial cell activation. May act as a nuclear transcription factor that negatively regulates the expression of cardiac genes. The protein is Ankyrin repeat domain-containing protein 1 (ANKRD1) of Oryctolagus cuniculus (Rabbit).